The primary structure comprises 729 residues: Fatty acid oxidation complex subunit alpha (729 aa).

The interval 1–189 is enoyl-CoA hydratase/isomerase; that stretch reads MLYKGDTLYV…KIGLIDGIVK (189 aa). Aspartate 296 contacts substrate. Residues 311-729 are 3-hydroxyacyl-CoA dehydrogenase; the sequence is EMPKQAAVLG…ARPVGALKTA (419 aa). NAD(+) contacts are provided by residues methionine 324, aspartate 343, 400–402, lysine 407, and serine 429; that span reads VVE. Histidine 450 functions as the For 3-hydroxyacyl-CoA dehydrogenase activity in the catalytic mechanism. Asparagine 453 lines the NAD(+) pocket. Asparagine 500 and tyrosine 660 together coordinate substrate. Residues 708-729 form a disordered region; sequence RHNEPYYPPVEPARPVGALKTA.

In the N-terminal section; belongs to the enoyl-CoA hydratase/isomerase family. The protein in the C-terminal section; belongs to the 3-hydroxyacyl-CoA dehydrogenase family. Heterotetramer of two alpha chains (FadB) and two beta chains (FadA).

It catalyses the reaction a (3S)-3-hydroxyacyl-CoA + NAD(+) = a 3-oxoacyl-CoA + NADH + H(+). The catalysed reaction is a (3S)-3-hydroxyacyl-CoA = a (2E)-enoyl-CoA + H2O. It carries out the reaction a 4-saturated-(3S)-3-hydroxyacyl-CoA = a (3E)-enoyl-CoA + H2O. The enzyme catalyses (3S)-3-hydroxybutanoyl-CoA = (3R)-3-hydroxybutanoyl-CoA. It catalyses the reaction a (3Z)-enoyl-CoA = a 4-saturated (2E)-enoyl-CoA. The catalysed reaction is a (3E)-enoyl-CoA = a 4-saturated (2E)-enoyl-CoA. Its pathway is lipid metabolism; fatty acid beta-oxidation. In terms of biological role, involved in the aerobic and anaerobic degradation of long-chain fatty acids via beta-oxidation cycle. Catalyzes the formation of 3-oxoacyl-CoA from enoyl-CoA via L-3-hydroxyacyl-CoA. It can also use D-3-hydroxyacyl-CoA and cis-3-enoyl-CoA as substrate. The sequence is that of Fatty acid oxidation complex subunit alpha from Enterobacter sp. (strain 638).